An 837-amino-acid chain; its full sequence is MSLSHLYRDGEGRIDDDDDERENFEITDWDLQNEFNPNRQRHWQTKEEATYGVWAERDSDDERPSFGGKRARDYSAPVNFISAGLKKGAAEEAELEDSDDEERPVKQDDFPKDFGPRKLKTGGNFKPSQKGFAGGTKSFMDFGSWERHTKGIGQKLLQKMGYVPGRGLGKNAQGIINPIEAKQRKGKGAVGAYGSERTTQSMQDFPVVDSEEEAEEEFQKGLSQWRKDPSGSKKKPKYSYKTVEELKAKGRISKKLTAPQKELSQVKVIDMTGREQKVYYSYSQISHKHNVPDDGLPLQSQQLPQSGKEAKAPGFALPELEHNLQLLIDLTEQEIIQNDRQLQYERDMVVNLFHELEKMTEVLDHEERVISNLSKVLEMVEECERRMQPDCSNPLTLDECARIFETLQDKYYEEYRMSDRVDLAVAIVYPLMKEYFKEWDPLKDCTYGTEIISKWKSLLENDQLLSHGGQDLSADAFHRLIWEVWMPFVRNIVTQWQPRNCDPMVDFLDSWVHIIPVWILDNILDQLIFPKLQKEVENWNPLTDTVPIHSWIHPWLPLMQARLEPLYSPIRSKLSSALQKWHPSDSSAKLILQPWKDVFTPGSWEAFMVKNIVPKLGMCLGELVINPHQQHMDAFYWVIDWEGMISVSSLVGLLEKHFFPKWLQVLCSWLSNSPNYEEITKWYLGWKSMFSDQVLAHPSVKDKFNEALDIMNRAVSSNVGAYMQPGARENIAYLTHTERRKDFQYEATRERREAENMAQRGIGVAASSVPMNFKDLIETKAEEHNIVFMPVIGKRHEGKQLYTFGRIVIYIDRGVVFVQGEKTWVPTSLQSLIDMAK.

Basic and acidic residues-rich tracts occupy residues Met-1 to Arg-13 and Val-53 to Pro-64. 3 disordered regions span residues Met-1–Arg-21, Val-53–Arg-72, and Leu-85–Ala-133. 3 positions are modified to phosphoserine: Ser-2, Ser-59, and Ser-98. Residues Glu-91–Glu-102 show a composition bias toward acidic residues. The segment covering Arg-103–Pro-116 has biased composition (basic and acidic residues). Residue Ser-144 is modified to Phosphoserine. One can recognise a G-patch domain in the interval Thr-149 to Ser-195. Residues Ile-179–Pro-236 are disordered. Phosphoserine is present on Ser-210. A Nuclear localization signal motif is present at residues Val-700–Asn-705. The interval Ile-710–Leu-734 is required for nuclear speckle localization.

This sequence belongs to the TFP11/STIP family. Identified in the spliceosome C complex. Found in the Intron Large (IL) complex, a post-mRNA release spliceosomal complex containing the excised intron, U2, U5 and U6 snRNPs, and splicing factors. Interacts with TUFT1. Interacts with DHX15; indicative for a recruitment of DHX15 to the IL complex. Interacts with GCFC2.

Its subcellular location is the cytoplasm. The protein localises to the nucleus. Functionally, involved in pre-mRNA splicing, specifically in spliceosome disassembly during late-stage splicing events. Intron turnover seems to proceed through reactions in two lariat-intron associated complexes termed Intron Large (IL) and Intron Small (IS). In cooperation with DHX15 seems to mediate the transition of the U2, U5 and U6 snRNP-containing IL complex to the snRNP-free IS complex leading to efficient debranching and turnover of excised introns. May play a role in the differentiation of ameloblasts and odontoblasts or in the forming of the enamel extracellular matrix. The sequence is that of Tuftelin-interacting protein 11 (TFIP11) from Macaca fascicularis (Crab-eating macaque).